A 451-amino-acid chain; its full sequence is Phosphoglucosamine mutase (451 aa).

The Phosphoserine intermediate role is filled by serine 103. Mg(2+) contacts are provided by serine 103, aspartate 243, aspartate 245, and aspartate 247. Serine 103 is modified (phosphoserine).

Belongs to the phosphohexose mutase family. Requires Mg(2+) as cofactor. In terms of processing, activated by phosphorylation.

The enzyme catalyses alpha-D-glucosamine 1-phosphate = D-glucosamine 6-phosphate. In terms of biological role, catalyzes the conversion of glucosamine-6-phosphate to glucosamine-1-phosphate. The sequence is that of Phosphoglucosamine mutase from Lactobacillus johnsonii (strain CNCM I-12250 / La1 / NCC 533).